The primary structure comprises 384 residues: NAD(P) transhydrogenase subunit alpha part 1 (384 aa).

The interval Pro-126–Ile-136 is RQD loop; involved in interaction with PntB. NAD(+)-binding positions include Arg-127 to Ser-129, Gln-132 to Asp-135, Val-180 to Val-182, Asp-202 to Arg-204, Gly-234, Gln-247, and Leu-266.

It belongs to the AlaDH/PNT family. In terms of assembly, heterotrimer of two alpha chains and a beta (PntB) chain; in Rhodospirillum, the alpha chain is made of two subunits (PntAA and PntAB) and forms a dimer.

The catalysed reaction is NAD(+) + NADPH + H(+)(in) = NADH + NADP(+) + H(+)(out). The transhydrogenation between NADH and NADP is coupled to respiration and ATP hydrolysis and functions as a proton pump across the membrane. The polypeptide is NAD(P) transhydrogenase subunit alpha part 1 (pntAA) (Rhodospirillum rubrum (strain ATCC 11170 / ATH 1.1.1 / DSM 467 / LMG 4362 / NCIMB 8255 / S1)).